A 59-amino-acid polypeptide reads, in one-letter code: Conotoxin Sr5.4 (59 aa).

Residues 1 to 22 (MRCLPVFVILLLLIASAPSVDA) form the signal peptide. Residues 23-44 (QLKTKDDVPLASFHDNAKGTQH) constitute a propeptide that is removed on maturation.

Belongs to the conotoxin T superfamily. In terms of processing, contains 2 disulfide bonds that can be either 'C1-C3, C2-C4' or 'C1-C4, C2-C3', since these disulfide connectivities have been observed for conotoxins with cysteine framework V (for examples, see AC P0DQQ7 and AC P81755). Expressed by the venom duct.

It localises to the secreted. This chain is Conotoxin Sr5.4, found in Conus spurius (Alphabet cone).